The primary structure comprises 594 residues: MRAGRGGVPGSGGLRAPPPPLLLLLLAMLPAAAPRSPALAAAPAGPSVSLYLSEDEVRRLLGLDAELYYVRNDLISHYALSFNLLVPSETNFLHFTWHAKSKVEYKLGFQVDNFVAMGMPQVNISAQGEVPRTLSVFRVELSCTGKVDSEVMILMQLNLTVNSSKNFTVLNFKRRKMCYKKLEEVKTSALDKNTSRTIYDPVHAAPTTSTRVFYISVGVCCAVIFLVAIILAVLHLHSMKRIELDDSISASSSSQGLSQPSTQTTQYLRADTPNNATPITSSSGYPTLRIEKNDLRSVTLLEAKAKVKDIAISRERITLKDVLQEGTFGRIFHGILVDEKDPNKEKQTFVKTVKDQASEVQVTMMLTESCKLRGLHHRNLLPITHVCIEEGEKPMVVLPYMNWGNLKLFLRQCKLVEANNPQAISQQDLVHMAIQIACGMSYLARREVIHRDLAARNCVIDDTLQVKITDNALSRDLFPMDYHCLGDNENRPVRWMALESLVNNEFSSASDVWAFGVTLWELMTLGQTPYVDIDPFEMAAYLKDGYRIAQPINCPDELFAVMACCWALDPEERPKFQQLVQCLTEFHAALGAYV.

The signal sequence occupies residues 1-34; the sequence is MRAGRGGVPGSGGLRAPPPPLLLLLLAMLPAAAP. At 35-211 the chain is on the extracellular side; the sequence is RSPALAAAPA…VHAAPTTSTR (177 aa). The WIF domain maps to 50–178; the sequence is LYLSEDEVRR…VLNFKRRKMC (129 aa). Residues asparagine 123, asparagine 158, asparagine 162, asparagine 166, and asparagine 193 are each glycosylated (N-linked (GlcNAc...) asparagine). Residues 212-239 form a helical membrane-spanning segment; that stretch reads VFYISVGVCCAVIFLVAIILAVLHLHSM. At 240-594 the chain is on the cytoplasmic side; it reads KRIELDDSIS…EFHAALGAYV (355 aa). Positions 250–266 are enriched in low complexity; it reads ASSSSQGLSQPSTQTTQ. The tract at residues 250–283 is disordered; it reads ASSSSQGLSQPSTQTTQYLRADTPNNATPITSSS. Over residues 272 to 283 the composition is skewed to polar residues; that stretch reads TPNNATPITSSS. Positions 317-590 constitute a Protein kinase domain; sequence ITLKDVLQEG…QCLTEFHAAL (274 aa). ATP-binding positions include 323–331 and lysine 351; that span reads LQEGTFGRI. The Proton acceptor role is filled by aspartate 452. Phosphotyrosine; by autocatalysis is present on tyrosine 482.

Belongs to the protein kinase superfamily. Tyr protein kinase family. Interacts with DVL1 (via PDZ domain). In terms of processing, proteolytically cleaved, in part by presenilin, in response to WNT3 stimulation. In terms of tissue distribution, is detected in all the tissues. Highest levels are seen in the ovary, lung and placenta.

The protein localises to the membrane. Its subcellular location is the nucleus. It is found in the cytoplasm. It carries out the reaction L-tyrosyl-[protein] + ATP = O-phospho-L-tyrosyl-[protein] + ADP + H(+). In terms of biological role, may be a coreceptor along with FZD8 of Wnt proteins, such as WNT1, WNT3, WNT3A and WNT5A. Involved in neuron differentiation, axon guidance, corpus callosum establishment and neurite outgrowth. In response to WNT3 stimulation, receptor C-terminal cleavage occurs in its transmembrane region and allows the C-terminal intracellular product to translocate from the cytoplasm to the nucleus where it plays a crucial role in neuronal development. The polypeptide is Tyrosine-protein kinase RYK (Ryk) (Mus musculus (Mouse)).